Here is a 919-residue protein sequence, read N- to C-terminus: Translocase of chloroplast 101, chloroplastic (919 aa).

Disordered regions lie at residues 20 to 47 (SASRSLSEEVGVDPALVSEGAPEGVIEG) and 64 to 211 (VDDE…NETR). Residues 73–88 (SENKAVVETEKVESKP) are compositionally biased toward basic and acidic residues. Positions 96–128 (FAEEDGDSDADAEDEDDEDDEDDDEDDDDEDDK) are enriched in acidic residues. The segment covering 182 to 207 (QRPNGAPSTQLTATTEENANSDTAEG) has biased composition (polar residues). The region spanning 284-513 (DFACTILVLG…KLQETATPGR (230 aa)) is the AIG1-type G domain. A G1 region spans residues 293–300 (GKTGVGKS). 296-301 (GVGKSA) is a binding site for GTP. A Mg(2+)-binding site is contributed by serine 300. Residues 319 to 323 (PSTNK) are G2. The segment at 340 to 343 (DTPG) is G3. Positions 412 to 415 (THAS) are G4. GTP is bound by residues histidine 413 and 461-462 (EN). Residues 461-463 (ENH) are G5. 2 disordered regions span residues 540 to 585 (LPDE…LTKE) and 611 to 650 (RRRKEMKKRQAQMSKEELAQPDEADDEAGQPAAVPVPMPD). Residues 543–567 (EQLDESDESDDDEEEEDSEADDYDE) show a composition bias toward acidic residues. Positions 574–585 (LSKEELEELTKE) are enriched in basic and acidic residues. Over residues 629–638 (AQPDEADDEA) the composition is skewed to acidic residues. The span at 641-650 (PAAVPVPMPD) shows a compositional bias: low complexity. The chain crosses the membrane as a helical span at residues 893 to 914 (MVLIGIVPILRSLINCRFGFGG).

It belongs to the TRAFAC class TrmE-Era-EngA-EngB-Septin-like GTPase superfamily. AIG1/Toc34/Toc159-like paraseptin GTPase family. TOC159 subfamily. Part of the TOC core complex. It depends on Mg(2+) as a cofactor.

The protein resides in the plastid. It localises to the chloroplast outer membrane. Functionally, GTPase involved in protein precursor import into chloroplasts. Seems to recognize chloroplast-destined precursor proteins and regulate their presentation to the translocation channel through GTP hydrolysis. Probably specialized in the import of nuclear encoded non-photosynthetic preproteins from the cytoplasm to the chloroplast. This chain is Translocase of chloroplast 101, chloroplastic, found in Physcomitrium patens (Spreading-leaved earth moss).